Here is a 146-residue protein sequence, read N- to C-terminus: Ribonuclease H (146 aa).

One can recognise an RNase H type-1 domain in the interval Glu4–Val145. Positions 13, 51, 73, and 137 each coordinate Mg(2+).

It belongs to the RNase H family. As to quaternary structure, monomer. Requires Mg(2+) as cofactor.

It localises to the cytoplasm. The catalysed reaction is Endonucleolytic cleavage to 5'-phosphomonoester.. In terms of biological role, endonuclease that specifically degrades the RNA of RNA-DNA hybrids. This is Ribonuclease H from Ehrlichia ruminantium (strain Gardel).